Here is a 607-residue protein sequence, read N- to C-terminus: Zinc finger CCCH domain-containing protein 66 (607 aa).

2 ANK repeats span residues 57-87 (EERT…DVNR) and 92-124 (DGAT…NPDS). Residues 161–178 (LNEVNGQEESEPEVEVEV) show a composition bias toward acidic residues. The segment at 161-193 (LNEVNGQEESEPEVEVEVEVSPPRGSERKEYPV) is disordered. 2 C3H1-type zinc fingers span residues 254–276 (PCPE…HGIF) and 284–308 (QYRT…HKPE). Positions 342–363 (ISPLPIGATTTPPLSPNGVSSP) are disordered. Polar residues predominate over residues 349 to 361 (ATTTPPLSPNGVS).

In Arabidopsis thaliana (Mouse-ear cress), this protein is Zinc finger CCCH domain-containing protein 66.